Here is an 858-residue protein sequence, read N- to C-terminus: M-phase phosphoprotein 8 (858 aa).

The tract at residues V18–G55 is disordered. Phosphoserine occurs at positions 51, 85, 136, and 138. Residues F59–V118 form the Chromo domain. The interval W80 to D87 is histone H3K9me3 binding. Positions N129–M175 are disordered. T144 is subject to Phosphothreonine. Phosphoserine; by CDK1 occurs at positions 149 and 164. The segment covering C159–R169 has biased composition (basic and acidic residues). S188 carries the post-translational modification Phosphoserine. 2 disordered regions span residues E209–A234 and N250–A300. 3 positions are modified to phosphoserine: S267, S271, and S278. The segment covering I273–I282 has biased composition (acidic residues). Over residues S283–A300 the composition is skewed to basic and acidic residues. Position 318 is a phosphoserine (S318). Positions E321 to R431 are disordered. Residues R335–A357 are compositionally biased toward basic and acidic residues. T385 is modified (phosphothreonine; by CDK1). A phosphoserine mark is found at S392 and S400. A compositionally biased stretch (basic and acidic residues) spans E407–R431. T453 is subject to Phosphothreonine. ANK repeat units lie at residues T598 to G627, N631 to V660, N664 to I693, and H697 to R726.

In terms of assembly, homodimer. Interacts (via chromo domain) with histone H3K9me3. Has the highest affinity for H3K9me3, and lesser affinity for H3K9me2 and H3K9me1. Component of the HUSH complex; at least composed of TASOR, PPHLN1 and MPHOSPH8. Interacts with DNMT3, EHMT1 and SETDB1. Interacts with MORC2; the interaction associateS MORC2 with the HUSH complex which recruits MORC2 to heterochromatic loci. Interacts with ZNF638; leading to recruitment of the HUSH complex to unintegrated retroviral DNA. Interacts with TASOR. Post-translationally, phosphorylated in M (mitotic) phase. Phosphorylation by CDK1 promotes dissociation from chromatin. Expressed in the spermatogonia, spermatocytes and granular cells within the cerebellum.

It is found in the nucleus. Its subcellular location is the chromosome. Functionally, heterochromatin component that specifically recognizes and binds methylated 'Lys-9' of histone H3 (H3K9me) and promotes recruitment of proteins that mediate epigenetic repression. Mediates recruitment of the HUSH complex to H3K9me3 sites: the HUSH complex is recruited to genomic loci rich in H3K9me3 and is required to maintain transcriptional silencing by promoting recruitment of SETDB1, a histone methyltransferase that mediates further deposition of H3K9me3, as well as MORC2. Binds H3K9me and promotes DNA methylation by recruiting DNMT3A to target CpG sites; these can be situated within the coding region of the gene. Mediates down-regulation of CDH1 expression. Also represses L1 retrotransposons in collaboration with MORC2 and, probably, SETDB1, the silencing is dependent of repressive epigenetic modifications, such as H3K9me3 mark. Silencing events often occur within introns of transcriptionally active genes, and lead to the down-regulation of host gene expression. The HUSH complex is also involved in the silencing of unintegrated retroviral DNA by being recruited by ZNF638: some part of the retroviral DNA formed immediately after infection remains unintegrated in the host genome and is transcriptionally repressed. This Mus musculus (Mouse) protein is M-phase phosphoprotein 8.